We begin with the raw amino-acid sequence, 393 residues long: Prokineticin receptor 1 (393 aa).

Over 1–62 the chain is Extracellular; that stretch reads METTVGALGE…TNSRTFFAAK (62 aa). Residue Asn-11 is glycosylated (N-linked (GlcNAc...) asparagine). The chain crosses the membrane as a helical span at residues 63–83; sequence IVIGMALVGIMLVCGIGNFIF. Topologically, residues 84 to 98 are cytoplasmic; it reads ITALARYKKLRNLTN. A helical transmembrane segment spans residues 99 to 119; that stretch reads LLIANLAISDFLVAIVCCPFE. The Extracellular segment spans residues 120 to 146; it reads MDYYVVRQLSWEHGHVLCASVNYLRTV. Cys-137 and Cys-217 are joined by a disulfide. Residues 147-167 form a helical membrane-spanning segment; that stretch reads SLYVSTNALLAIAIDRYLAIV. Residues 168 to 179 lie on the Cytoplasmic side of the membrane; that stretch reads HPLRPRMKCQTA. The helical transmembrane segment at 180 to 200 threads the bilayer; it reads AGLIFLVWSVSILIAIPAAYF. Residues 201 to 232 lie on the Extracellular side of the membrane; that stretch reads TTETVLVIVERQEKIFCGQIWPVDQQFYYRSY. A helical membrane pass occupies residues 233-253; it reads FLLVFGLEFVGPVVAMTLCYA. Residues 254–282 are Cytoplasmic-facing; the sequence is RVSRELWFKAVPGFQTEQIRRRLRCRRRT. A helical membrane pass occupies residues 283 to 303; sequence VLGLVCVLSAYVLCWAPFYGF. Topologically, residues 304–322 are extracellular; that stretch reads TIVRDFFPSVFVKEKHYLT. A helical transmembrane segment spans residues 323 to 343; the sequence is AFYVVECIAMSNSMINTLCFV. Residues 344 to 393 are Cytoplasmic-facing; the sequence is TVRNNTSKYLKRILRLQWRASPSGSKASADLDLRTTGIPATEEVDCIRLK.

The protein belongs to the G-protein coupled receptor 1 family. As to expression, expressed at high levels in the heart, skeletal muscle and pancreas. Expressed at lower levels in the brain, lung, liver and kidney.

It is found in the cell membrane. Functionally, receptor for prokineticin 1. Exclusively coupled to the G(q) subclass of heteromeric G proteins. Activation leads to mobilization of calcium, stimulation of phosphoinositide turnover and activation of p44/p42 mitogen-activated protein kinase. May play a role during early pregnancy. In Mus musculus (Mouse), this protein is Prokineticin receptor 1 (Prokr1).